Consider the following 415-residue polypeptide: uncharacterized protein (415 aa).

The TRAM domain occupies methionine 1 to alanine 52. 4 residues coordinate [4Fe-4S] cluster: cysteine 62, cysteine 68, cysteine 71, and cysteine 147. 4 residues coordinate S-adenosyl-L-methionine: glutamine 252, tyrosine 279, glutamate 299, and aspartate 347. The active-site Nucleophile is cysteine 373.

The protein belongs to the class I-like SAM-binding methyltransferase superfamily. RNA M5U methyltransferase family.

This is an uncharacterized protein from Caulobacter vibrioides (strain ATCC 19089 / CIP 103742 / CB 15) (Caulobacter crescentus).